Here is a 735-residue protein sequence, read N- to C-terminus: Catalase-peroxidase (735 aa).

The interval 1 to 31 (MENNTNPISGQGKCPFSGGAAKQSAGAGTRN) is disordered. A compositionally biased stretch (low complexity) spans 17–28 (SGGAAKQSAGAG). A cross-link (tryptophyl-tyrosyl-methioninium (Trp-Tyr) (with M-252)) is located at residues 103–226 (WHSAGTYRVA…LAAVQMGLIY (124 aa)). His104 functions as the Proton acceptor in the catalytic mechanism. The segment at residues 226 to 252 (YVNPEGPNGNPDPLASARDIRETFARM) is a cross-link (tryptophyl-tyrosyl-methioninium (Tyr-Met) (with W-103)). His267 contacts heme b. Residues 352–371 (KPKNGAGAGTVPDAHNSSKS) are disordered.

The protein belongs to the peroxidase family. Peroxidase/catalase subfamily. Homodimer or homotetramer. Requires heme b as cofactor. Post-translationally, formation of the three residue Trp-Tyr-Met cross-link is important for the catalase, but not the peroxidase activity of the enzyme.

The enzyme catalyses H2O2 + AH2 = A + 2 H2O. It carries out the reaction 2 H2O2 = O2 + 2 H2O. Its function is as follows. Bifunctional enzyme with both catalase and broad-spectrum peroxidase activity. The chain is Catalase-peroxidase from Flavobacterium psychrophilum (strain ATCC 49511 / DSM 21280 / CIP 103535 / JIP02/86).